A 349-amino-acid chain; its full sequence is tRNA pseudouridine synthase D (349 aa).

Asp-77 functions as the Nucleophile in the catalytic mechanism. Residues 151-309 (GVPNYFGEQR…ETIDESTLKL (159 aa)) enclose the TRUD domain.

This sequence belongs to the pseudouridine synthase TruD family.

It carries out the reaction uridine(13) in tRNA = pseudouridine(13) in tRNA. In terms of biological role, responsible for synthesis of pseudouridine from uracil-13 in transfer RNAs. The polypeptide is tRNA pseudouridine synthase D (Pseudoalteromonas translucida (strain TAC 125)).